A 55-amino-acid polypeptide reads, in one-letter code: Large ribosomal subunit protein bL33 (55 aa).

This sequence belongs to the bacterial ribosomal protein bL33 family.

The chain is Large ribosomal subunit protein bL33 from Paramagnetospirillum magneticum (strain ATCC 700264 / AMB-1) (Magnetospirillum magneticum).